Reading from the N-terminus, the 240-residue chain is Protein unc-119 homolog A (240 aa).

The span at M1–T12 shows a compositional bias: gly residues. The interval M1 to G61 is disordered. A compositionally biased stretch (low complexity) spans G13 to P23. 3 positions are modified to phosphoserine; by CK2: S37, S39, and S41. A tetradecanoate-binding site is contributed by Y131.

The protein belongs to the PDE6D/unc-119 family. Interacts with CABP4; in the absence of calcium. May interact with GTP-bound ARL1. Interacts with ARL2 and ARL3 (GTP-bound forms); this promotes the release of myristoylated cargo proteins. Found in a complex with ARL3, RP2 and UNC119; RP2 induces hydrolysis of GTP ARL3 in the complex, leading to the release of UNC119. Interacts with NPHP3 (when myristoylated). Interacts with CYS1 (when myristoylated). Interacts with MACIR; interaction only takes place when UNC119 is not liganded with myristoylated proteins. Interacts with LCK; this interaction plays a crucial role in activation of LCK. Interacts with FYN. Interacts with RAB11A; in a cell cycle-dependent manner. Interacts with LYN (via SH2 and SH3 domains); leading to LYN activation. Interacts with DNM1; leading to a decrease of DNM1 GTPase activity. Found in a complex with ABL1, ABL2, CRK and UNC119; leading to the inhibition of CRK phosphorylation by ABL kinases. Interacts with CD44. Interacts with KLHL18 (via kelch repeats). Interacts with PPP3CA, PPP3CB and PPP3CC. Interacts with USP48; this interaction promotes UNC119 stability. Post-translationally, phosphorylation suppresses its interaction with KLHL18 and down-regulates its KLHL18-mediated degradation. Phosphorylated more under light conditions than dark conditions. Dephosphorylated by calcineurin.

It localises to the cytoplasm. The protein resides in the cytoskeleton. It is found in the microtubule organizing center. Its subcellular location is the centrosome. The protein localises to the spindle. It localises to the spindle pole. In terms of biological role, involved in synaptic functions in photoreceptor cells, the signal transduction in immune cells as a Src family kinase activator, endosome recycling, the uptake of bacteria and endocytosis, protein trafficking in sensory neurons and as lipid-binding chaperone with specificity for a diverse subset of myristoylated proteins. Specifically binds the myristoyl moiety of a subset of N-terminally myristoylated proteins and is required for their localization. Binds myristoylated GNAT1 and is required for G-protein localization and trafficking in sensory neurons. Probably plays a role in trafficking proteins in photoreceptor cells. Plays important roles in mediating Src family kinase signals for the completion of cytokinesis via RAB11A. The polypeptide is Protein unc-119 homolog A (UNC119) (Canis lupus familiaris (Dog)).